We begin with the raw amino-acid sequence, 452 residues long: GTPase Der (452 aa).

2 consecutive EngA-type G domains span residues 4-169 (PIVA…PTTE) and 177-352 (IKVA…ASHR). Residues 10–17 (GRPNVGKS), 57–61 (DTGGL), 120–123 (NKCE), 183–190 (GRPNVGKS), 230–234 (DTAGI), and 295–298 (NKWD) each bind GTP. The KH-like domain occupies 353–438 (RRVSTAVINE…PIRLIWRGKS (86 aa)).

Belongs to the TRAFAC class TrmE-Era-EngA-EngB-Septin-like GTPase superfamily. EngA (Der) GTPase family. In terms of assembly, associates with the 50S ribosomal subunit.

Functionally, GTPase that plays an essential role in the late steps of ribosome biogenesis. This chain is GTPase Der, found in Gloeothece citriformis (strain PCC 7424) (Cyanothece sp. (strain PCC 7424)).